The chain runs to 425 residues: Dihydroorotase (425 aa).

Residues His61 and His63 each coordinate Zn(2+). Substrate contacts are provided by residues 63 to 65 (HLR) and Asn95. 4 residues coordinate Zn(2+): Lys146, His175, His224, and Asp293. Residue Lys146 is modified to N6-carboxylysine. Asp293 is a catalytic residue. Substrate is bound by residues His297 and 311–312 (PG).

Belongs to the metallo-dependent hydrolases superfamily. DHOase family. Class I DHOase subfamily. Requires Zn(2+) as cofactor.

The catalysed reaction is (S)-dihydroorotate + H2O = N-carbamoyl-L-aspartate + H(+). It functions in the pathway pyrimidine metabolism; UMP biosynthesis via de novo pathway; (S)-dihydroorotate from bicarbonate: step 3/3. Functionally, catalyzes the reversible cyclization of carbamoyl aspartate to dihydroorotate. This is Dihydroorotase from Aeropyrum pernix (strain ATCC 700893 / DSM 11879 / JCM 9820 / NBRC 100138 / K1).